The following is a 202-amino-acid chain: Putative 3-methyladenine DNA glycosylase (202 aa).

The protein belongs to the DNA glycosylase MPG family.

The chain is Putative 3-methyladenine DNA glycosylase from Staphylococcus aureus (strain MRSA252).